We begin with the raw amino-acid sequence, 77 residues long: Small ribosomal subunit protein bS18 (77 aa).

It belongs to the bacterial ribosomal protein bS18 family. In terms of assembly, part of the 30S ribosomal subunit. Forms a tight heterodimer with protein bS6.

In terms of biological role, binds as a heterodimer with protein bS6 to the central domain of the 16S rRNA, where it helps stabilize the platform of the 30S subunit. The protein is Small ribosomal subunit protein bS18 of Lactobacillus gasseri (strain ATCC 33323 / DSM 20243 / BCRC 14619 / CIP 102991 / JCM 1131 / KCTC 3163 / NCIMB 11718 / NCTC 13722 / AM63).